The sequence spans 312 residues: Homoserine O-acetyltransferase (312 aa).

C142 acts as the Acyl-thioester intermediate in catalysis. 2 residues coordinate substrate: K163 and S192. The Proton acceptor role is filled by H235. E237 is an active-site residue. R249 lines the substrate pocket.

It belongs to the MetA family.

It is found in the cytoplasm. The catalysed reaction is L-homoserine + acetyl-CoA = O-acetyl-L-homoserine + CoA. It participates in amino-acid biosynthesis; L-methionine biosynthesis via de novo pathway; O-acetyl-L-homoserine from L-homoserine: step 1/1. In terms of biological role, transfers an acetyl group from acetyl-CoA to L-homoserine, forming acetyl-L-homoserine. This is Homoserine O-acetyltransferase from Ruegeria sp. (strain TM1040) (Silicibacter sp.).